A 338-amino-acid chain; its full sequence is Nicotinate-nucleotide--dimethylbenzimidazole phosphoribosyltransferase (338 aa).

The active-site Proton acceptor is Glu-306.

This sequence belongs to the CobT family.

It catalyses the reaction 5,6-dimethylbenzimidazole + nicotinate beta-D-ribonucleotide = alpha-ribazole 5'-phosphate + nicotinate + H(+). The protein operates within nucleoside biosynthesis; alpha-ribazole biosynthesis; alpha-ribazole from 5,6-dimethylbenzimidazole: step 1/2. In terms of biological role, catalyzes the synthesis of alpha-ribazole-5'-phosphate from nicotinate mononucleotide (NAMN) and 5,6-dimethylbenzimidazole (DMB). This chain is Nicotinate-nucleotide--dimethylbenzimidazole phosphoribosyltransferase, found in Cereibacter sphaeroides (strain ATCC 17023 / DSM 158 / JCM 6121 / CCUG 31486 / LMG 2827 / NBRC 12203 / NCIMB 8253 / ATH 2.4.1.) (Rhodobacter sphaeroides).